The chain runs to 251 residues: Triosephosphate isomerase (251 aa).

Substrate is bound at residue 9 to 11; the sequence is NWK. Histidine 94 serves as the catalytic Electrophile. The Proton acceptor role is filled by glutamate 166. Substrate contacts are provided by residues glycine 172, serine 211, and 232–233; that span reads GG.

The protein belongs to the triosephosphate isomerase family. In terms of assembly, homodimer.

Its subcellular location is the cytoplasm. The catalysed reaction is D-glyceraldehyde 3-phosphate = dihydroxyacetone phosphate. It participates in carbohydrate biosynthesis; gluconeogenesis. Its pathway is carbohydrate degradation; glycolysis; D-glyceraldehyde 3-phosphate from glycerone phosphate: step 1/1. Involved in the gluconeogenesis. Catalyzes stereospecifically the conversion of dihydroxyacetone phosphate (DHAP) to D-glyceraldehyde-3-phosphate (G3P). The polypeptide is Triosephosphate isomerase (Xanthomonas euvesicatoria pv. vesicatoria (strain 85-10) (Xanthomonas campestris pv. vesicatoria)).